The sequence spans 401 residues: Dynactin subunit 2 (401 aa).

The tract at residues 1 to 25 (MADPKYADLPGIARNEPDVYETSDL) is disordered. Alanine 2 carries the N-acetylalanine modification. Phosphotyrosine is present on tyrosine 6. A Phosphoserine modification is found at serine 83. Tyrosine 86 carries the post-translational modification Phosphotyrosine. A coiled-coil region spans residues 99 to 132 (PQQKYQRLLHEVQELTTEVEKIKTTVKESATEEK). Threonine 134 and threonine 198 each carry phosphothreonine. Residues 214 to 244 (EQDKFSQAAKVAELEKRLTELETAVRCDQDA) adopt a coiled-coil conformation. Serine 320 carries the phosphoserine modification. Positions 379–399 (RENLATVEGNFASIDERMKKL) form a coiled coil.

This sequence belongs to the dynactin subunit 2 family. As to quaternary structure, subunit of dynactin, a multiprotein complex part of a tripartite complex with dynein and a adapter, such as BICDL1, BICD2 or HOOK3. The dynactin complex is built around ACTR1A/ACTB filament and consists of an actin-related filament composed of a shoulder domain, a pointed end and a barbed end. Its length is defined by its flexible shoulder domain. The soulder is composed of 2 DCTN1 subunits, 4 DCTN2 and 2 DCTN3. The 4 DCNT2 (via N-terminus) bind the ACTR1A filament and act as molecular rulers to determine the length. The pointed end is important for binding dynein-dynactin cargo adapters and consists of 4 subunits: ACTR10, DCNT4, DCTN5 and DCTN6. The barbed end is composed of a CAPZA1:CAPZB heterodimers, which binds ACTR1A/ACTB filament and dynactin and stabilizes dynactin. Interacts with BICD2 and CEP135. Interacts with DYNAP. Interacts with ECPAS. Interacts with MAPRE1.

The protein resides in the cytoplasm. Its subcellular location is the cytoskeleton. It localises to the microtubule organizing center. The protein localises to the centrosome. It is found in the membrane. Part of the dynactin complex that activates the molecular motor dynein for ultra-processive transport along microtubules. In the dynactin soulder domain, binds the ACTR1A filament and acts as a molecular ruler to determine the length. Modulates cytoplasmic dynein binding to an organelle, and plays a role in prometaphase chromosome alignment and spindle organization during mitosis. Involved in anchoring microtubules to centrosomes. May play a role in synapse formation during brain development. This chain is Dynactin subunit 2, found in Homo sapiens (Human).